We begin with the raw amino-acid sequence, 192 residues long: Thymidine kinase (192 aa).

ATP contacts are provided by residues 9-16 and 87-90; these read SAMNAGKS and DECQ. Residue Glu88 is the Proton acceptor of the active site. Zn(2+) contacts are provided by Cys145, Cys147, Cys182, and His185.

The protein belongs to the thymidine kinase family. Homotetramer.

It is found in the cytoplasm. The catalysed reaction is thymidine + ATP = dTMP + ADP + H(+). The sequence is that of Thymidine kinase from Vibrio vulnificus (strain CMCP6).